A 147-amino-acid polypeptide reads, in one-letter code: UPF0310 protein in gntR 5'region (147 aa).

It belongs to the UPF0310 family.

The protein is UPF0310 protein in gntR 5'region (oug) of Bacillus licheniformis.